Here is a 122-residue protein sequence, read N- to C-terminus: UPF0102 protein Krad_1407 (122 aa).

This sequence belongs to the UPF0102 family.

The polypeptide is UPF0102 protein Krad_1407 (Kineococcus radiotolerans (strain ATCC BAA-149 / DSM 14245 / SRS30216)).